Here is a 694-residue protein sequence, read N- to C-terminus: Putative bifunctional polynucleotide kinase/RNA ligase (694 aa).

Positions 1–385 (MLHVSRLLAN…TKQALNNKLA (385 aa)) are ligase domain. A bifunctional 5'-OH polynucleotide kinase/polynucleotide 3'-phosphatase region spans residues 394–694 (KQLLVLIGIS…FNVCRDYLEF (301 aa)). 401 to 408 (GISGSGKS) contributes to the ATP binding site.

It carries out the reaction a 5'-end dephospho-2'-deoxyribonucleoside-DNA + ATP = a 5'-end 5'-phospho-2'-deoxyribonucleoside-DNA + ADP + H(+). The enzyme catalyses ATP + (ribonucleotide)n-3'-hydroxyl + 5'-phospho-(ribonucleotide)m = (ribonucleotide)n+m + AMP + diphosphate.. Trifunctional enzyme that possesses a bifunctional polynucleotide kinase/phosphatase activity and an ATP-dependent RNA ligase activity. May therefore play a role to evade an RNA damage-based host response. This chain is Putative bifunctional polynucleotide kinase/RNA ligase (PNK/PNL), found in Autographa californica nuclear polyhedrosis virus (AcMNPV).